We begin with the raw amino-acid sequence, 56 residues long: Large ribosomal subunit protein bL33 (56 aa).

It belongs to the bacterial ribosomal protein bL33 family.

The protein is Large ribosomal subunit protein bL33 of Glaesserella parasuis serovar 5 (strain SH0165) (Haemophilus parasuis).